Reading from the N-terminus, the 285-residue chain is MSTVATSPGLSSFFSGKPLRFIAASILLVNGLFPAIWILFTSLKTEAELTVKPITWFPHAPTLANYMQAFSDQPLHLFLFNSFMVALLSTALTILISVLAAYALARLNLKYRALILSLIIAVSTFPLVTLLVPLFEIMRALNLLNSWTALILPYTVLSLPVCTLMLVSFFESIPRDLENAAMIDGCTRIGALFKVVVPLCAPGVFTAGILAFVNAWDEFLLALSFNSNPALRTLPVGIQLYQGEFAFPWPVISAALVVGIVPVAILIVIFQERVVSGLTAGGLKG.

6 consecutive transmembrane segments (helical) span residues 21 to 41, 83 to 103, 115 to 135, 150 to 170, 195 to 215, and 250 to 270; these read FIAA…ILFT, FMVA…AAYA, ILSL…VPLF, LILP…VSFF, VVVP…FVNA, and PVIS…IVIF. An ABC transmembrane type-1 domain is found at 79–270; the sequence is LFNSFMVALL…VPVAILIVIF (192 aa).

It belongs to the binding-protein-dependent transport system permease family. The complex is probably composed of two ATP-binding proteins (SmoE), two transmembrane proteins (SmoG and SmoH) and a solute-binding protein (SmoF).

It localises to the cell inner membrane. Part of the ABC transporter complex SmoEFGH involved in sulfoquinovosyl glycerol (SQGro) uptake. Responsible for the translocation of the substrate across the membrane. The chain is Sulfoquinovosyl glycerol transport system permease protein SmoH from Agrobacterium fabrum (strain C58 / ATCC 33970) (Agrobacterium tumefaciens (strain C58)).